The primary structure comprises 505 residues: Maturase K (505 aa).

This sequence belongs to the intron maturase 2 family. MatK subfamily.

It localises to the plastid. The protein resides in the chloroplast. Functionally, usually encoded in the trnK tRNA gene intron. Probably assists in splicing its own and other chloroplast group II introns. The protein is Maturase K of Silene otites (Spanish catchfly).